The following is a 4008-amino-acid chain: Extracellular matrix organizing protein FRAS1 (4008 aa).

An N-terminal signal peptide occupies residues 1–26 (MGVLKVWLGLALALAEFAVLPHHSEG). 5 VWFC domains span residues 27–88 (ACVY…PECV), 93–153 (GSCH…PVCV), 157–217 (KPCS…PQCS), 219–279 (RSCS…EECV), and 283–343 (GSCS…PECI). Residues 27-3901 (ACVYQDSLLA…AASLSQTGAS (3875 aa)) lie on the Extracellular side of the membrane. A Phosphoserine modification is found at Ser344. A VWFC 6 domain is found at 347-417 (GYCVYEETGE…VKGQCCPDCT (71 aa)). Residue Asn361 is glycosylated (N-linked (GlcNAc...) asparagine). FU repeat units follow at residues 409–460 (KGQC…GFYQ), 462–505 (GSLC…GFYQ), 507–553 (RHSC…GFYN), 555–599 (QGTC…GYYA), 602–647 (TGRC…GFYS), 649–705 (HGVC…HFYL), 708–753 (TGIC…GYFH), 755–800 (EGSC…EQFL), 803–852 (VGYC…GYYA), 854–900 (RGAC…GHYL), 903–948 (NHVC…QYYL), 952–997 (TNTC…SFYQ), 999–1042 (SGLC…GYFA), and 1046–1089 (KHKC…GFSV). A glycan (N-linked (GlcNAc...) asparagine) is linked at Asn728. Asn1093 and Asn1108 each carry an N-linked (GlcNAc...) asparagine glycan. CSPG repeat units follow at residues 1102–1197 (TPSL…LKIS), 1217–1308 (APYV…LQAN), 1329–1438 (GLQL…FEVS), 1463–1559 (APKV…FSFA), 1595–1689 (PVFQ…ISVT), 1710–1810 (GPRL…FSVS), and 1833–1936 (PPVI…FYVS). Residue Asn1504 is glycosylated (N-linked (GlcNAc...) asparagine). Asn1777 is a glycosylation site (N-linked (GlcNAc...) asparagine). 2 N-linked (GlcNAc...) asparagine glycosylation sites follow: Asn1948 and Asn1978. 5 CSPG repeats span residues 1957 to 2057 (EPPR…FSLT), 2078 to 2177 (TPHL…FDVV), 2199 to 2291 (PPVI…FTLS), 2311 to 2404 (SLPV…FTVS), and 2439 to 2536 (TPRI…FLVK). Calx-beta domains follow at residues 2543–2646 (VSDN…VELS), 2659–2770 (AKVI…IALA), 2784–2890 (AKVL…VFLS), 2905–3007 (IAIN…VYLG), and 3025–3129 (ATIT…LVLG). Residues Asn2563, Asn2664, and Asn2682 are each glycosylated (N-linked (GlcNAc...) asparagine). Residues Asn2908, Asn2985, Asn3070, Asn3218, Asn3676, and Asn3875 are each glycosylated (N-linked (GlcNAc...) asparagine). Residues 3902–3922 (IGSALAAIMLLLLVFLVACFI) form a helical membrane-spanning segment. Residues 3923–4008 (NRKCQKQRKK…HNNLQDGTEV (86 aa)) lie on the Cytoplasmic side of the membrane.

Belongs to the FRAS1 family. Expressed in many adult tissues, with highest levels in kidney, pancreas and thalamus. Relatively high expression was also detected in fetal kidney and heart.

Its subcellular location is the cell membrane. Its function is as follows. Involved in extracellular matrix organization. Required for the regulation of epidermal-basement membrane adhesion responsible for proper organogenesis during embryonic development. Involved in brain organization and function. In Homo sapiens (Human), this protein is Extracellular matrix organizing protein FRAS1.